A 610-amino-acid polypeptide reads, in one-letter code: MATENGAVELGTQSLSTDHPPTDAAGDGSPASEKEPSLPDTEKDLGPTNTKKDPGAPDPKKNPDPPSLKKTPEAPGPEKKGDSAPASASNQGPSGEGDGGGGPAEGGTGPPAVLPQPTATADASIQKLDATQAPSGNQESGEAKAGKKAAECREAGRRGSPAFLHSPSCPAIISCSEKTLAMKPLSETTELIFAGVSETPDPQDPGPAKDEGGTNTLADGKEEAEAGQAEQAKVQGDTSQRIGFQAVPSERAEVGQALCLTAKEEDCFQILDDCPPPPAPFPHRIVELRTGNVSSEFSMNSKEALGGGKFGAVCTCTERSTGLKLAAKVIKKQTPKDKEMVLLEIEVMNQLNHRNLIQLYSAIETSHEIILFMEYIEGGELFERIVDEDYQLTEVDTMVFVRQICDGILFMHKMRVLHLDLKPENILCVNTTGHLVKIIDFGLARRYNPNEKLKVNFGTPEFLSPEVVNYDQISDKTDMWSLGVITYMLLSGLSPFLGDDDTETLNNVLSANWYFDEETFEAVSDEAKDFVSNLITKDQSARMSAEQCLAHPWLNNLAEKAKRCNRRLKSQILLKKYLMKRRWKKNFIAVSAANRFKKISSSGALMALGV.

Disordered regions lie at residues 1–168 (MATE…HSPS) and 196–240 (VSET…DTSQ). At A2 the chain carries N-acetylalanine. Composition is skewed to basic and acidic residues over residues 32 to 63 (SEKE…KKNP) and 70 to 82 (KTPE…KKGD). A compositionally biased stretch (gly residues) spans 94-109 (SGEGDGGGGPAEGGTG). The segment covering 141–157 (GEAKAGKKAAECREAGR) has biased composition (basic and acidic residues). Phosphoserine occurs at positions 160, 166, and 168. The region spanning 299-554 (MNSKEALGGG…AEQCLAHPWL (256 aa)) is the Protein kinase domain. ATP-binding positions include 305 to 313 (LGGGKFGAV) and K328. The active-site Proton acceptor is the D420. Phosphothreonine is present on T459. Residues 588–600 (IAVSAANRFKKIS) are calmodulin-binding.

Belongs to the protein kinase superfamily. CAMK Ser/Thr protein kinase family. May interact with centrin.

The protein resides in the cytoplasm. The catalysed reaction is L-seryl-[myosin light chain] + ATP = O-phospho-L-seryl-[myosin light chain] + ADP + H(+). The enzyme catalyses L-threonyl-[myosin light chain] + ATP = O-phospho-L-threonyl-[myosin light chain] + ADP + H(+). Its function is as follows. Implicated in the level of global muscle contraction and cardiac function. Phosphorylates a specific serine in the N-terminus of a myosin light chain. This is Myosin light chain kinase 2, skeletal/cardiac muscle (Mylk2) from Rattus norvegicus (Rat).